The chain runs to 126 residues: MNLIETLEQEEIARLGKIIPEFAPGDTVVVSVNVVEGARKRVQAYEGVVIAKRNRGLNSAFTVRKISSGEGVERTFQTYSPLIAAIEVKRRGDVRRAKLYYLRDRSGKSARIKEKLPARKIKTAAV.

This sequence belongs to the bacterial ribosomal protein bL19 family.

Its function is as follows. This protein is located at the 30S-50S ribosomal subunit interface and may play a role in the structure and function of the aminoacyl-tRNA binding site. In Albidiferax ferrireducens (strain ATCC BAA-621 / DSM 15236 / T118) (Rhodoferax ferrireducens), this protein is Large ribosomal subunit protein bL19.